Here is a 557-residue protein sequence, read N- to C-terminus: Vanadium-dependent bromoperoxidase (557 aa).

At glutamine 1 the chain carries Pyrrolidone carboxylic acid. Residues 1-22 (QTCSTSDDADDPTPPNERDDEA) are disordered. The cysteines at positions 77 and 86 are disulfide-linked. 2 residues coordinate vanadate: lysine 341 and arginine 349. Histidine 411 is a catalytic residue. 3 residues coordinate vanadate: serine 416, glycine 417, and histidine 418. Histidine 418 is a catalytic residue. Cysteine 441 and cysteine 462 are oxidised to a cystine. The vanadate site is built by arginine 480 and histidine 486. Residues cysteine 544 and cysteine 555 are joined by a disulfide bond.

It belongs to the vanadium-dependent haloperoxidase family. In terms of assembly, homodimer; disulfide-linked. The cofactor is vanadate.

The catalysed reaction is RH + Br(-) + H2O2 = RBr + 2 H2O.. Catalyzes the halogenation of organic substrates in the presence of hydrogen peroxide. In Ascophyllum nodosum (Knotted wrack), this protein is Vanadium-dependent bromoperoxidase.